The following is a 360-amino-acid chain: Phosphoserine aminotransferase (360 aa).

Arg-42 is an L-glutamate binding site. Pyridoxal 5'-phosphate-binding positions include 76–77, Trp-102, Thr-152, Asp-172, and Gln-195; that span reads AS. Lys-196 is subject to N6-(pyridoxal phosphate)lysine. 237–238 lines the pyridoxal 5'-phosphate pocket; that stretch reads NT.

It belongs to the class-V pyridoxal-phosphate-dependent aminotransferase family. SerC subfamily. As to quaternary structure, homodimer. Requires pyridoxal 5'-phosphate as cofactor.

It localises to the cytoplasm. The catalysed reaction is O-phospho-L-serine + 2-oxoglutarate = 3-phosphooxypyruvate + L-glutamate. The enzyme catalyses 4-(phosphooxy)-L-threonine + 2-oxoglutarate = (R)-3-hydroxy-2-oxo-4-phosphooxybutanoate + L-glutamate. It participates in amino-acid biosynthesis; L-serine biosynthesis; L-serine from 3-phospho-D-glycerate: step 2/3. In terms of biological role, catalyzes the reversible conversion of 3-phosphohydroxypyruvate to phosphoserine and of 3-hydroxy-2-oxo-4-phosphonooxybutanoate to phosphohydroxythreonine. The chain is Phosphoserine aminotransferase from Bacillus cereus (strain ATCC 10987 / NRS 248).